The sequence spans 521 residues: NAD(P)H-quinone oxidoreductase subunit 2 (521 aa).

14 helical membrane passes run 14 to 34, 42 to 62, 79 to 99, 109 to 129, 132 to 152, 167 to 187, 207 to 227, 241 to 261, 275 to 295, 303 to 323, 331 to 351, 375 to 395, 397 to 417, and 463 to 483; these read VILPEGIVIVTLLTVLVTDLI, LTPALAITGLSAAIAVLTLQW, LSIVFRGIVLLSAAVTILLSI, LGEFITILLTASLGGMFLSGA, LVTIFVSLETLSISSYLLTGY, LLIGAASSAIFLYGVSLLYGL, LALLISLIFVIAGIAFKISAV, PTPIVAFLSVGSKAAGFALAI, WHFVFTALAILSLVLGNVVAL, LLAYSSIAQAGFVMIGLIAGT, VYYLLIYLFMNLGGFACVILF, LGLSLCLLSLGGIPPLAGFFG, LYLFWAGWQAGLYGLVLLALI, and AGLVVCVIATAVAGILSNPLF.

The protein belongs to the complex I subunit 2 family. NDH-1 can be composed of about 15 different subunits; different subcomplexes with different compositions have been identified which probably have different functions.

The protein localises to the cellular thylakoid membrane. The catalysed reaction is a plastoquinone + NADH + (n+1) H(+)(in) = a plastoquinol + NAD(+) + n H(+)(out). It catalyses the reaction a plastoquinone + NADPH + (n+1) H(+)(in) = a plastoquinol + NADP(+) + n H(+)(out). In terms of biological role, NDH-1 shuttles electrons from an unknown electron donor, via FMN and iron-sulfur (Fe-S) centers, to quinones in the respiratory and/or the photosynthetic chain. The immediate electron acceptor for the enzyme in this species is believed to be plastoquinone. Couples the redox reaction to proton translocation, and thus conserves the redox energy in a proton gradient. Cyanobacterial NDH-1 also plays a role in inorganic carbon-concentration. The polypeptide is NAD(P)H-quinone oxidoreductase subunit 2 (Synechococcus elongatus (strain ATCC 33912 / PCC 7942 / FACHB-805) (Anacystis nidulans R2)).